We begin with the raw amino-acid sequence, 119 residues long: Large ribosomal subunit protein bL20 (119 aa).

This sequence belongs to the bacterial ribosomal protein bL20 family.

Functionally, binds directly to 23S ribosomal RNA and is necessary for the in vitro assembly process of the 50S ribosomal subunit. It is not involved in the protein synthesizing functions of that subunit. The polypeptide is Large ribosomal subunit protein bL20 (Cellvibrio japonicus (strain Ueda107) (Pseudomonas fluorescens subsp. cellulosa)).